The primary structure comprises 212 residues: High frequency lysogenization protein HflD homolog (212 aa).

The protein belongs to the HflD family.

It is found in the cytoplasm. The protein localises to the cell inner membrane. The protein is High frequency lysogenization protein HflD homolog of Pectobacterium carotovorum subsp. carotovorum (strain PC1).